We begin with the raw amino-acid sequence, 1827 residues long: MADERKDEAKAPHWTSAPLTEASAHSHPPEIKDQGGAGEGLVRSANGFPYREDEEGAFGEHGSQGTYSNTKENGINGELTSADRETAEEVSARIVQVVTAEAVAVLKGEQEKEAQHKDQTAALPLAAEETANLPPSPPPSPASEQTVTVEEDLLTASKMEFHDQQELTPSTAEPSDQKEKESEKQSKPGEDLKHAALVSQPETTKTYPDKKDMQGTEEEKAPLALFGHTLVASLEDMKQKTEPSLVVPGIDLPKEPPTPKEQKDWFIEMPTEAKKDEWGLVAPISPGPLTPMREKDVFDDIPKWEGKQFDSPMPSPFQGGSFTLPLDVMKNEIVTETSPFAPAFLQPDDKKSLQQTSGPATAKDSFKIEEPHEAKPDKMAEAPPSEAMTLPKDAHIPVVEEHVMGKVLEEEKEAINQETVQQRDTFTPSGQEPILTEKETELKLEEKTTISDKEAVPKESKPPKPADEEIGIIQTSTEHTFSEQKDQEPTTDMLKQDSFPVSLEQAVTDSAMTSKTLEKAMTEPSALIEKSSIQELFEMRVDDKDKIEGVGAATSAELDMPFYEDKSGMSKYFETSALKEEATKSIEPGSDYYELSDTRESVHESIDTMSPMHKNGDKEFQTGKESQPSPPAQEAGYSTLAQSYPSDLPEEPSSPQERMFTIDPKVYGEKRDLHSKNKDDLTLSRSLGLGGRSAIEQRSMSINLPMSCLDSIALGFNFGRGHDLSPLASDILTNTSGSMDEGDDYLPATTPALEKAPCFPVESKEEEQIEKVKATGEESTQAEISCESPFLAKDFYKNGTVMAPDLPEMLDLAGTRSRLASVSADAEVARRKSVPSETVVEDSRTGLPPVTDENHVIVKTDSQLEDLGYCVFNKYTVPLPSPVQDSENLSGESGTFYEGTDDKVRRDLATDLSLIEVKLAAAGRVKDEFSVDKEASAHISGDKSGLSKEFDQEKKANDRLDTVLEKSEEHADSKEHAKKTEEAGDEIETFGLGVTYEQALAKDLSIPTDASSEKAEKGLSSVPEIAEVEPSKKVEQGLDFAVQGQLDVKISDFGQMASGLNIDDRRATELKLEATQDMTPSSKAPQEADAFMGVESGHMKEGTKVSETEVKEKVAKPDLVHQEAVDKEESYESSGEHESLTMESLKADEGKKETSPESSLIQDEIAVKLSVEIPCPPAVSEADLATDERADVQMEFIQGPKEESKETPDISITPSDVAEPLHETIVSEPAEIQSEEEEIEAQGEYDKLLFRSDTLQITDLGVSGAREEFVETCPSEHKGVIESVVTIEDDFITVVQTTTDEGESGSHSVRFAALEQPEVERRPSPHDEEEFEVEEAAEAQAEPKDGSPEAPASPEREEVALSEYKTETYDDYKDETTIDDSIMDADSLWVDTQDDDRSIMTEQLETIPKEEKAEKEARRSSLEKHRKEKPFKTGRGRISTPERKVAKKEPSTVSRDEVRRKKAVYKKAELAKKTEVQAHSPSRKFILKPAIKYTRPTHLSCVKRKTTAAGGESALAPSVFKQAKDKVSDGVTKSPEKRSSLPRPSSILPPRRGVSGDRDENSFSLNSSISSSARRTTRSEPIRRAGKSGTSTPTTPGSTAITPGTPPSYSSRTPGTPGTPSYPRTPHTPGTPKSAILVPSEKKVAIIRTPPKSPATPKQLRLINQPLPDLKNVKSKIGSTDNIKYQPKGGQVQIVTKKIDLSHVTSKCGSLKNIRHRPGGGRVKIESVKLDFKEKAQAKVGSLDNAHHVPGGGNVKIDSQKLNFREHAKARVDHGAEIITQSPGRSSVASPRRLSNVSSSGSINLLESPQLATLAEDVTAALAKQGL.

The span at 1–11 (MADERKDEAKA) shows a compositional bias: basic and acidic residues. Disordered regions lie at residues 1–88 (MADE…ETAE) and 109–221 (EQEK…EEKA). Polar residues predominate over residues 63–73 (SQGTYSNTKEN). Y67 is modified (phosphotyrosine). Residues 109 to 119 (EQEKEAQHKDQ) show a composition bias toward basic and acidic residues. Residues 120–133 (TAALPLAAEETANL) show a composition bias toward low complexity. Phosphoserine occurs at positions 136, 140, and 143. 2 stretches are compositionally biased toward basic and acidic residues: residues 175–194 (SDQK…DLKH) and 207–221 (YPDK…EEKA). Phosphoserine is present on residues S285, T323, and Q354. Positions 340-497 (FAPAFLQPDD…EPTTDMLKQD (158 aa)) are disordered. Residues 364 to 380 (DSFKIEEPHEAKPDKMA) are compositionally biased toward basic and acidic residues. Phosphoserine is present on E386. Over residues 392–415 (KDAHIPVVEEHVMGKVLEEEKEAI) the composition is skewed to basic and acidic residues. Residues 416–430 (NQETVQQRDTFTPSG) show a composition bias toward polar residues. Over residues 435–467 (LTEKETELKLEEKTTISDKEAVPKESKPPKPAD) the composition is skewed to basic and acidic residues. Phosphoserine is present on residues S498, S601, S605, S610, S629, S725, and S729. The segment at 579-660 (KEEATKSIEP…EPSSPQERMF (82 aa)) is disordered. Residues 596 to 606 (SDTRESVHESI) show a composition bias toward basic and acidic residues. The interval 701 to 744 (SINLPMSCLDSIALGFNFGRGHDLSPLASDILTNTSGSMDEGDD) is interaction with KNDC1. T733 is modified (phosphothreonine). Phosphoserine is present on residues S736 and S738. Y745 carries the post-translational modification Phosphotyrosine. S821, S881, S890, and S936 each carry phosphoserine. Disordered regions lie at residues 931–988 (VDKE…DEIE), 1073–1160 (EATQ…ESSL), 1197–1216 (IQGP…TPSD), 1297–1378 (TTTD…ETTI), 1403–1460 (QLET…EVRR), 1471–1490 (AKKT…LKPA), and 1506–1638 (TTAA…AILV). 2 stretches are compositionally biased toward basic and acidic residues: residues 945-982 (GLSK…KTEE) and 1097-1155 (GHMK…KETS). A phosphoserine mark is found at S1133, S1134, and S1139. Phosphothreonine is present on T1154. Residues S1155 and S1159 each carry the phosphoserine modification. The span at 1327–1337 (DEEEFEVEEAA) shows a compositional bias: acidic residues. S1347 and S1353 each carry phosphoserine. 2 stretches are compositionally biased toward basic and acidic residues: residues 1354 to 1376 (PERE…KDET) and 1407 to 1425 (IPKE…LEKH). A compositionally biased stretch (basic residues) spans 1426-1435 (RKEKPFKTGR). The segment covering 1440 to 1459 (TPERKVAKKEPSTVSRDEVR) has biased composition (basic and acidic residues). The interval 1447–1467 (KKEPSTVSRDEVRRKKAVYKK) is calmodulin-binding. Over residues 1522–1539 (QAKDKVSDGVTKSPEKRS) the composition is skewed to basic and acidic residues. S1534 bears the Phosphoserine mark. Residues 1541-1552 (LPRPSSILPPRR) are compositionally biased toward low complexity. S1555 bears the Phosphoserine mark. Composition is skewed to low complexity over residues 1562–1574 (SFSL…SSAR) and 1587–1603 (KSGT…AITP). Residue S1588 is modified to Phosphoserine. A phosphothreonine mark is found at T1602, T1605, T1616, T1619, and T1649. Residues 1609 to 1619 (YSSRTPGTPGT) are compositionally biased toward polar residues. S1653 bears the Phosphoserine mark. Tau/MAP repeat units lie at residues 1661–1691 (RLIN…KGGQ), 1692–1722 (VQIV…GGGR), and 1723–1754 (VKIE…GGGN). Phosphoserine; by MARK1 is present on S1679. The tract at residues 1779–1801 (ITQSPGRSSVASPRRLSNVSSSG) is disordered. Phosphoserine is present on residues S1782, S1787, S1790, S1795, and S1808.

Interacts with KNDC1 (via KIND2); the interaction enhances MAP2 phosphorylation and localizes KNDC1 to dendrites. Interacts with DPYSL5. In terms of processing, phosphorylated at serine residues in K-X-G-S motifs by MAP/microtubule affinity-regulating kinase (MARK1 or MARK2), causing detachment from microtubules, and their disassembly. Isoform 2 is probably phosphorylated by PKA at Ser-323, Ser-354 and Ser-386 and by FYN at Tyr-67. The interaction with KNDC1 enhances MAP2 threonine phosphorylation.

It is found in the cytoplasm. Its subcellular location is the cytoskeleton. The protein localises to the cell projection. The protein resides in the dendrite. Its function is as follows. The exact function of MAP2 is unknown but MAPs may stabilize the microtubules against depolymerization. They also seem to have a stiffening effect on microtubules. This Homo sapiens (Human) protein is Microtubule-associated protein 2 (MAP2).